The chain runs to 141 residues: Galactose-6-phosphate isomerase subunit LacA (141 aa).

It belongs to the LacAB/RpiB family. Heteromultimeric protein consisting of LacA and LacB.

The enzyme catalyses aldehydo-D-galactose 6-phosphate = keto-D-tagatose 6-phosphate. The protein operates within carbohydrate metabolism; D-galactose 6-phosphate degradation; D-tagatose 6-phosphate from D-galactose 6-phosphate: step 1/1. This chain is Galactose-6-phosphate isomerase subunit LacA, found in Streptococcus equi subsp. zooepidemicus (strain MGCS10565).